A 251-amino-acid chain; its full sequence is HTH-type transcriptional regulator UlaR (251 aa).

An HTH deoR-type domain is found at 3 to 58 (EAQRHQILLDMLAQLGFVTVENVIERLGISPATARRDINKLDESGKLKKVRNGAEA). The H-T-H motif DNA-binding region spans 20 to 39 (VTVENVIERLGISPATARRD).

It is found in the cytoplasm. Functionally, represses ulaG and the ulaABCDEF operon. In Salmonella arizonae (strain ATCC BAA-731 / CDC346-86 / RSK2980), this protein is HTH-type transcriptional regulator UlaR.